The following is a 246-amino-acid chain: Phosphate import ATP-binding protein PstB (246 aa).

Positions 3 to 241 (AKTTNLNLFY…PKQEKTKAYL (239 aa)) constitute an ABC transporter domain. 35 to 42 (GASGCGKS) serves as a coordination point for ATP.

Belongs to the ABC transporter superfamily. Phosphate importer (TC 3.A.1.7) family. In terms of assembly, the complex is composed of two ATP-binding proteins (PstB), two transmembrane proteins (PstC and PstA) and a solute-binding protein (PstS).

Its subcellular location is the cell inner membrane. It carries out the reaction phosphate(out) + ATP + H2O = ADP + 2 phosphate(in) + H(+). In terms of biological role, part of the ABC transporter complex PstSACB involved in phosphate import. Responsible for energy coupling to the transport system. The polypeptide is Phosphate import ATP-binding protein PstB (Campylobacter jejuni subsp. jejuni serotype O:2 (strain ATCC 700819 / NCTC 11168)).